The sequence spans 76 residues: Histone H2A (76 aa).

The disordered stretch occupies residues 1 to 23 (MSGRGKTGGKARAKAKTRSSRAG). Ser-2 bears the N-acetylserine; in acipensins mark. N-acetylserine; in histone H2A is present on Ser-2. A Phosphoserine; in histone H2A modification is found at Ser-2. Position 6 is an N6-(2-hydroxyisobutyryl)lysine (Lys-6). Residue Lys-6 is modified to N6-acetyllysine; in histone H2A. The segment covering 7 to 19 (TGGKARAKAKTRS) has biased composition (basic residues). Lys-10 bears the N6-(2-hydroxyisobutyryl)lysine; alternate mark. Lys-10 carries the N6-lactoyllysine; alternate modification. Lys-10 bears the N6-succinyllysine mark. Glycyl lysine isopeptide (Lys-Gly) (interchain with G-Cter in ubiquitin); in histone H2A cross-links involve residues Lys-14 and Lys-16. An N6-(2-hydroxyisobutyryl)lysine; alternate modification is found at Lys-37. An N6-(2-hydroxyisobutyryl)lysine mark is found at Lys-65 and Lys-66.

It belongs to the histone H2A family. As to quaternary structure, the nucleosome is a histone octamer containing two molecules each of H2A, H2B, H3 and H4 assembled in one H3-H4 heterotetramer and two H2A-H2B heterodimers. The octamer wraps approximately 147 bp of DNA. Phosphorylation on Ser-2 is enhanced during mitosis. Phosphorylation on Ser-2 directly represses transcription.

The protein resides in the nucleus. Its subcellular location is the chromosome. Functionally, core component of nucleosome. Nucleosomes wrap and compact DNA into chromatin, limiting DNA accessibility to the cellular machineries which require DNA as a template. Histones thereby play a central role in transcription regulation, DNA repair, DNA replication and chromosomal stability. DNA accessibility is regulated via a complex set of post-translational modifications of histones, also called histone code, and nucleosome remodeling. In terms of biological role, acipensins are antimicrobial peptides. Acipensins 1 and 2 have antibacterial activity against Gram-positive bacteria L.monocytogenes EGD (MIC are 1.1 uM and 1.0 uM, respectively) and S.aureus ATCC 33591 (MIC are 0.9 uM and 0.6 uM, respectively), against Gram-negative bacterium E.coli ML-35p (MIC are 0.7 uM and 0.3 uM, respectively) and antifungal activity against C.albicans 820 (MIC are 1.0 uM and 0.9 uM, respectively). Acipensin 6 has antibacterial activity against Gram-negative bacterium E.coli ML-35p (MIC=2.5 uM). Antimicrobial activity is reduced by high ionic strength. Acipensins 1, 2 and 6 have no hemolytic (up to 40 uM) or cytotoxic (up to 20 uM) effects on human cells in vitro. The protein is Histone H2A of Acipenser gueldenstaedtii (Russian sturgeon).